The following is an 853-amino-acid chain: DNA mismatch repair protein MutS (853 aa).

613-620 (GPNMGGKS) lines the ATP pocket.

Belongs to the DNA mismatch repair MutS family.

This protein is involved in the repair of mismatches in DNA. It is possible that it carries out the mismatch recognition step. This protein has a weak ATPase activity. The protein is DNA mismatch repair protein MutS of Vibrio campbellii (strain ATCC BAA-1116).